Consider the following 473-residue polypeptide: Arginine biosynthesis bifunctional protein ArgJ, mitochondrial (473 aa).

Substrate is bound by residues T201, K230, T241, E328, N468, and T473. T241 acts as the Nucleophile in catalysis.

This sequence belongs to the ArgJ family. As to quaternary structure, heterodimer of an alpha and a beta chain. Post-translationally, the alpha and beta chains are autoproteolytically processed from a single precursor protein within the mitochondrion.

Its subcellular location is the mitochondrion matrix. It catalyses the reaction N(2)-acetyl-L-ornithine + L-glutamate = N-acetyl-L-glutamate + L-ornithine. The catalysed reaction is L-glutamate + acetyl-CoA = N-acetyl-L-glutamate + CoA + H(+). It functions in the pathway amino-acid biosynthesis; L-arginine biosynthesis; L-ornithine and N-acetyl-L-glutamate from L-glutamate and N(2)-acetyl-L-ornithine (cyclic): step 1/1. It participates in amino-acid biosynthesis; L-arginine biosynthesis; N(2)-acetyl-L-ornithine from L-glutamate: step 1/4. In terms of biological role, catalyzes two activities which are involved in the cyclic version of arginine biosynthesis: the synthesis of acetylglutamate from glutamate and acetyl-CoA, and of ornithine by transacetylation between acetylornithine and glutamate. The protein is Arginine biosynthesis bifunctional protein ArgJ, mitochondrial of Paracoccidioides brasiliensis (strain Pb18).